A 154-amino-acid polypeptide reads, in one-letter code: CS6 fimbrial subunit A (154 aa).

Residues 1–18 (MKKTIGLILILASFGSHA) form the signal peptide.

It is found in the fimbrium. Fimbriae (also called pili), polar filaments radiating from the surface of the bacterium to a length of 0.5-1.5 micrometers and numbering 100-300 per cell, enable bacteria to colonize the epithelium of specific host organs. This chain is CS6 fimbrial subunit A (cssA), found in Escherichia coli.